The primary structure comprises 192 residues: Fe/S biogenesis protein NfuA (192 aa).

[4Fe-4S] cluster is bound by residues cysteine 149 and cysteine 152.

This sequence belongs to the NfuA family. Homodimer. The cofactor is [4Fe-4S] cluster.

Functionally, involved in iron-sulfur cluster biogenesis. Binds a 4Fe-4S cluster, can transfer this cluster to apoproteins, and thereby intervenes in the maturation of Fe/S proteins. Could also act as a scaffold/chaperone for damaged Fe/S proteins. The protein is Fe/S biogenesis protein NfuA of Shewanella sp. (strain ANA-3).